The primary structure comprises 75 residues: High-potential iron-sulfur protein (75 aa).

[4Fe-4S] cluster-binding residues include Cys-38, Cys-41, Cys-54, and Cys-68.

In terms of assembly, homodimer. Monomer at different ionic strengths.

Its function is as follows. Specific class of high-redox-potential 4Fe-4S ferredoxins. Functions in anaerobic electron transport in most purple and in some other photosynthetic bacteria and in at least one genus (Paracoccus) of halophilic, denitrifying bacteria. Competent in photosynthetic electron transfer to oxidized cytochrome bc1 complex via the membrane-bound c-type tetraheme. The chain is High-potential iron-sulfur protein (hip) from Rhodoferax fermentans.